Here is a 1522-residue protein sequence, read N- to C-terminus: Myosin-15 (1522 aa).

A Myosin N-terminal SH3-like domain is found at 12–61; sequence RKGDKVWVEDKDLAWIAADVLDSFDNKLHVETSTGKKVFVSPEKLFRRDP. In terms of domain architecture, Myosin motor spans 67-737; it reads NGVDDMTKLT…QIGILDSRRA (671 aa). ATP-binding positions include 161–168 and 214–222; these read GESGAGKT and NDNSSRFGK. Actin-binding regions lie at residues 499 to 533, 535 to 558, 593 to 618, and 618 to 640; these read LIEK…FQNF, FHPR…AGKV, FPSA…KQQL, and LQAL…KPNS. 5 consecutive IQ domains span residues 763-792, 788-817, 811-840, 836-865, and 859-888; these read ARAS…AAAA, NAAA…AAIV, LVSA…HRAA, EHRA…SIIA, and RQSS…VANE. The stretch at 889–1059 forms a coiled coil; that stretch reads AGALRLAKTK…NQVLMQKTLI (171 aa). The Dilute domain maps to 1164–1456; that stretch reads NIIIEGINEA…VSQMRVLVDK (293 aa).

The protein belongs to the TRAFAC class myosin-kinesin ATPase superfamily. Myosin family. Plant myosin class XI subfamily. As to quaternary structure, homodimer. Interacts with MYOB1 and MYOB7. Interacts with WIT1 and WIT2. Core component of the LINC complex which is composed of inner nuclear membrane SUN domain-containing proteins coupled to outer nuclear membrane WIP and WIT proteins. The LINC complex also involves nucleoskeletal proteins CRWN/LINC and possibly KAKU4 and the cytoskeletal myosin KAKU1.

The protein localises to the cytoplasm. It localises to the nucleus membrane. In terms of biological role, myosin heavy chain that is required for the cell cycle-regulated transport of various organelles and proteins for their segregation. Functions by binding with its tail domain to receptor proteins on organelles and exerting force with its N-terminal motor domain against actin filaments, thereby transporting its cargo along polarized actin cables. Involved in trafficking of Golgi stacks and mitochondria. Plays a role in nuclear shape determination. Drives nuclear movement along actin filaments. As component of the SUN-WIP-WIT2-KAKU1 complex, mediates the transfer of cytoplasmic forces to the nuclear envelope (NE), leading to nuclear shape changes. This is Myosin-15 (XI-I) from Arabidopsis thaliana (Mouse-ear cress).